The following is a 1461-amino-acid chain: Autotransporter adhesin SadA (1461 aa).

Residues 1–54 (MNRIFKVLWNAATGTFVVTSETAKSRGKKNGRRKLAVSALIGLSSIMVSADALA) form the signal peptide. The segment at 55–1372 (NAGNDTGDGV…EEANTYTDQK (1318 aa)) is surface exposed passenger domain. The tract at residues 1373 to 1461 (MGEMNSKIKG…SAAIGAGFQW (89 aa)) is translocator domain. 4 consecutive transmembrane segments (beta stranded) span residues 1407 to 1417 (GANMTSIAGGT), 1421 to 1431 (ESAVAIGVSMV), 1440 to 1446 (KLQGTSN), and 1450 to 1461 (DYSAAIGAGFQW).

This sequence belongs to the autotransporter-2 (AT-2) (TC 1.B.40) family. As to quaternary structure, homotrimer.

It is found in the cell surface. It localises to the cell outer membrane. In terms of biological role, involved in cell aggregation, biofilm formation, and adhesion to human intestinal epithelial cells. The sequence is that of Autotransporter adhesin SadA from Salmonella typhimurium (strain LT2 / SGSC1412 / ATCC 700720).